The sequence spans 467 residues: Cis-zeatin O-glucosyltransferase 1 (467 aa).

The active-site Proton acceptor is histidine 21. Residues histidine 21 and asparagine 91 each coordinate an anthocyanidin. Aspartate 127 (charge relay) is an active-site residue. UDP-alpha-D-glucose-binding residues include alanine 343, glutamine 345, histidine 360, tryptophan 363, asparagine 364, serine 365, glutamate 368, aspartate 384, and glutamine 385.

The protein belongs to the UDP-glycosyltransferase family. In terms of tissue distribution, highly expressed in root. Expressed at lower level in kernel and cob. Weakly expressed in leaves. Weakly or not expressed in stems.

The enzyme catalyses cis-zeatin + UDP-alpha-D-glucose = O-beta-D-glucosyl-cis-zeatin + UDP + H(+). Functionally, utilizes UDP-glucose as the sugar donor and catalyzes the formation of O-beta-D-glucosyl-cis-zeatin from cis-zeatin. May regulate active versus storage forms of cytokinins and could have an impact on seed growth. In Zea mays (Maize), this protein is Cis-zeatin O-glucosyltransferase 1 (CISZOG1).